A 1249-amino-acid polypeptide reads, in one-letter code: Fanconi anemia group J protein (1249 aa).

A Helicase ATP-binding domain is found at 11-442 (GGVKIYFPYK…KDHEPLRAVC (432 aa)). Over residues 102 to 127 (QGTSRHFNYPSTPPSERNGTSSTCQD) the composition is skewed to polar residues. The segment at 102–131 (QGTSRHFNYPSTPPSERNGTSSTCQDSPEK) is disordered. The Nuclear localization signal signature appears at 158–175 (KKRIRPLETTQQIRKRHC). Residue 185 to 192 (AKVDSGKT) coordinates ATP. [4Fe-4S] cluster-binding residues include Cys-283, Cys-298, Cys-310, and Cys-350. The DEAH box signature appears at 393–396 (DEAH). 7 positions are modified to phosphoserine: Ser-505, Ser-927, Ser-930, Ser-956, Ser-990, Ser-1004, and Ser-1032. Residues 888 to 1063 (HQKVLNVSIK…ESSNLTVNTS (176 aa)) are interaction with BRCA1. Disordered regions lie at residues 1018 to 1042 (KATP…EKME) and 1108 to 1127 (VSEE…EAED). Residues 1023–1032 (LGSSENSASS) are compositionally biased toward polar residues. The span at 1110 to 1122 (EEDKQSTSNRDFE) shows a compositional bias: basic and acidic residues. Ser-1237 is modified (phosphoserine). The residue at position 1249 (Lys-1249) is an N6-acetyllysine.

Belongs to the DEAD box helicase family. DEAH subfamily. Interacts with the replication protein A complex (RPA) via the RPA1 subunit; following DNA damage they colocalize in foci in the nucleus. Binds directly to the BRCT domains of BRCA1. Interacts with the CIA complex components CIAO1, CIAO2B and MMS19. [4Fe-4S] cluster serves as cofactor. Post-translationally, phosphorylated. Phosphorylation is necessary for interaction with BRCA1, and is cell-cycle regulated. Acetylation at Lys-1249 facilitates DNA end processing required for repair and checkpoint signaling. Ubiquitously expressed, with highest levels in testis.

Its subcellular location is the nucleus. The protein localises to the cytoplasm. The catalysed reaction is Couples ATP hydrolysis with the unwinding of duplex DNA at the replication fork by translocating in the 5'-3' direction. This creates two antiparallel DNA single strands (ssDNA). The leading ssDNA polymer is the template for DNA polymerase III holoenzyme which synthesizes a continuous strand.. The enzyme catalyses ATP + H2O = ADP + phosphate + H(+). With respect to regulation, helicase activity on forked substrates is stimulated by replication protein A complex heterotrimer (RPA1, RPA2, RPA3). Helicase activity on G-quadruplex DNA is stimulated 3-fold by RPA, and inhibited by MSH2/MSH6. Unwinding of G-quadruplex DNA is inhibited by ATP-gamma-S and telomestatin (TMS); TMA does not inhibit unwinding of forked-duplex DNA. Helicase activity on dsDNA and G-quadruplex DNA is inhibited by porphyrin derivatives meso-tetra (N-methyl-4-pyridyl) porphine tetra tosylate (T4) and N-methyl mesoporphyrin IX (NMM). Its function is as follows. DNA-dependent ATPase and 5'-3' DNA helicase required for the maintenance of chromosomal stability. Acts late in the Fanconi anemia pathway, after FANCD2 ubiquitination. Involved in the repair of DNA double-strand breaks by homologous recombination in a manner that depends on its association with BRCA1. Involved in the repair of abasic sites at replication forks by promoting the degradation of DNA-protein cross-links: acts by catalyzing unfolding of HMCES DNA-protein cross-link via its helicase activity, exposing the underlying DNA and enabling cleavage of the DNA-protein adduct by the SPRTN metalloprotease. Can unwind RNA:DNA substrates. Unwinds G-quadruplex DNA; unwinding requires a 5'-single stranded tail. This is Fanconi anemia group J protein from Homo sapiens (Human).